A 519-amino-acid polypeptide reads, in one-letter code: MYLLPLPAAARVALRRLGVRGLWDRGLSTADMTKGLVLGIYAKDKDDDLPQFTSAGESFNKLVSGKLREMLNISGPPLKAGKTRTFYGLHQDFPSVVVVGLGKRSAGVDDQENWHEGKENIRAAVAAGCRQVQDLELPSVEVDPCGDAQAAAEGAVLGLYEYDDLKQKKKVAVSAKLHGSGDLEAWEKGVLFASGQNLARHLMESPANEMTPTRFAEIIEKNLKSASSKTKVHIRPKSWIEEQEMGSFLSVAKGSEEPPVFLEIHYMGSPNATEAPLVFVGKGITFDSGGISIKASANMDLMRADMGGAATICSAIVSAAKLNLPINIIGLAPLCENMPSGKANKPGDVVRARNGKTIQVDNTDAEGRLILADALCYAHTFNPKVIINAATLTGAMDVALGSGATGVFTNSSWLWNKLFEASVETGDRVWRMPLFEHYTRQVIDCQLADVNNLGKYRSAGACTAAAFLREFVTHTKWAHLDIAGVMTNKDEIPYLRKGMSGRPTRTLIEFLLRFSKDSS.

N6-succinyllysine is present on Lys45. Phosphoserine is present on Ser54. Lys61 and Lys103 each carry N6-succinyllysine. Phosphoserine occurs at positions 180 and 194. Zn(2+) contacts are provided by Leu202 and Met203. Residue Lys221 is modified to N6-acetyllysine; alternate. Position 221 is an N6-succinyllysine; alternate (Lys221). Phosphoserine is present on Ser238. Residues Lys282 and Asp287 each coordinate Zn(2+). 4 residues coordinate substrate: Lys282, Asp287, Ser292, and Lys294. Asp287 serves as a coordination point for Mg(2+). Lys294 is an active-site residue. 4 residues coordinate Zn(2+): Arg303, Asp305, Asp364, and Glu366. Substrate contacts are provided by Asp305 and Asp364. Residues Asp364 and Glu366 each coordinate Mg(2+). The active site involves Arg368. Lys455 carries the N6-acetyllysine; alternate modification. The residue at position 455 (Lys455) is an N6-succinyllysine; alternate. Position 476 is an N6-succinyllysine (Lys476). Lys489 bears the N6-acetyllysine; alternate mark. Lys489 is modified (N6-succinyllysine; alternate).

It belongs to the peptidase M17 family. In terms of assembly, homohexamer. Zn(2+) is required as a cofactor. It depends on Mn(2+) as a cofactor.

The protein resides in the cytoplasm. The catalysed reaction is Release of an N-terminal amino acid, Xaa-|-Yaa-, in which Xaa is preferably Leu, but may be other amino acids including Pro although not Arg or Lys, and Yaa may be Pro. Amino acid amides and methyl esters are also readily hydrolyzed, but rates on arylamides are exceedingly low.. The enzyme catalyses an S-substituted L-cysteinylglycine + H2O = an S-substituted L-cysteine + glycine. It catalyses the reaction L-cysteinylglycine + H2O = L-cysteine + glycine. It carries out the reaction S-benzyl-L-cysteinylglycine + H2O = S-benzyl-L-cysteine + glycine. The catalysed reaction is Release of N-terminal proline from a peptide.. Cytosolic metallopeptidase that catalyzes the removal of unsubstituted N-terminal hydrophobic amino acids from various peptides. The presence of Zn(2+) ions is essential for the peptidase activity, and the association with other cofactors can modulate the substrate spectificity of the enzyme. For instance, in the presence of Mn(2+), it displays a specific Cys-Gly hydrolyzing activity of Cys-Gly-S-conjugates. Involved in the metabolism of glutathione and in the degradation of glutathione S-conjugates, which may play a role in the control of the cell redox status. The chain is Cytosol aminopeptidase from Mus musculus (Mouse).